The sequence spans 306 residues: Galactosylgalactosylxylosylprotein 3-beta-glucuronosyltransferase I (306 aa).

At methionine 1–valine 11 the chain is on the cytoplasmic side. The chain crosses the membrane as a helical; Signal-anchor for type II membrane protein span at residues leucine 12 to glycine 29. Residues lysine 30 to valine 306 lie on the Lumenal side of the membrane. Asparagine 90 is a glycosylation site (N-linked (GlcNAc...) asparagine). Mn(2+) is bound at residue aspartate 163. Glutamate 252 (proton acceptor) is an active-site residue.

It belongs to the glycosyltransferase 43 family. Requires Mn(2+) as cofactor.

The protein localises to the golgi apparatus membrane. It catalyses the reaction 3-O-(beta-D-galactosyl-(1-&gt;3)-beta-D-galactosyl-(1-&gt;4)-beta-D-xylosyl)-L-seryl-[protein] + UDP-alpha-D-glucuronate = 3-O-(beta-D-GlcA-(1-&gt;3)-beta-D-Gal-(1-&gt;3)-beta-D-Gal-(1-&gt;4)-beta-D-Xyl)-L-seryl-[protein] + UDP + H(+). It functions in the pathway protein modification; protein glycosylation. Involved in the biosynthesis of L2/HNK-1 carbohydrate epitope on both glycolipids and glycoproteins. Shows strict specificity for Gal-beta-1,3-Gal-beta-1,4-Xyl, exhibiting negligible incorporation into other galactoside substrates. The protein is Galactosylgalactosylxylosylprotein 3-beta-glucuronosyltransferase I (GlcAT-I) of Drosophila melanogaster (Fruit fly).